We begin with the raw amino-acid sequence, 1368 residues long: DNA-directed RNA polymerase subunit beta (1368 aa).

It belongs to the RNA polymerase beta chain family. The RNAP catalytic core consists of 2 alpha, 1 beta, 1 beta' and 1 omega subunit. When a sigma factor is associated with the core the holoenzyme is formed, which can initiate transcription.

It carries out the reaction RNA(n) + a ribonucleoside 5'-triphosphate = RNA(n+1) + diphosphate. DNA-dependent RNA polymerase catalyzes the transcription of DNA into RNA using the four ribonucleoside triphosphates as substrates. This chain is DNA-directed RNA polymerase subunit beta, found in Cupriavidus metallidurans (strain ATCC 43123 / DSM 2839 / NBRC 102507 / CH34) (Ralstonia metallidurans).